A 252-amino-acid chain; its full sequence is Imidazole glycerol phosphate synthase subunit HisF (252 aa).

Active-site residues include Asp11 and Asp130.

This sequence belongs to the HisA/HisF family. In terms of assembly, heterodimer of HisH and HisF.

It localises to the cytoplasm. The enzyme catalyses 5-[(5-phospho-1-deoxy-D-ribulos-1-ylimino)methylamino]-1-(5-phospho-beta-D-ribosyl)imidazole-4-carboxamide + L-glutamine = D-erythro-1-(imidazol-4-yl)glycerol 3-phosphate + 5-amino-1-(5-phospho-beta-D-ribosyl)imidazole-4-carboxamide + L-glutamate + H(+). The protein operates within amino-acid biosynthesis; L-histidine biosynthesis; L-histidine from 5-phospho-alpha-D-ribose 1-diphosphate: step 5/9. Functionally, IGPS catalyzes the conversion of PRFAR and glutamine to IGP, AICAR and glutamate. The HisF subunit catalyzes the cyclization activity that produces IGP and AICAR from PRFAR using the ammonia provided by the HisH subunit. This Bacillus mycoides (strain KBAB4) (Bacillus weihenstephanensis) protein is Imidazole glycerol phosphate synthase subunit HisF.